The chain runs to 324 residues: Pseudouridylate synthase RPUSD4, mitochondrial (324 aa).

A mitochondrion-targeting transit peptide spans 1-11; it reads MAAAGGGATRG. Asp105 is a catalytic residue.

This sequence belongs to the pseudouridine synthase RluA family.

Its subcellular location is the mitochondrion matrix. It is found in the nucleus. The protein resides in the cytoplasm. It carries out the reaction uridine in 5S rRNA = pseudouridine in 5S rRNA. It catalyses the reaction a uridine in tRNA = a pseudouridine in tRNA. The catalysed reaction is a uridine in mRNA = a pseudouridine in mRNA. Catalyzes uridine to pseudouridine isomerization (pseudouridylation) of different mitochondrial RNA substrates. Acts on position 1397 in 16S mitochondrial ribosomal RNA (16S mt-rRNA). This modification is required for the assembly of 16S mt-rRNA into a functional mitochondrial ribosome. Acts on position 39 in mitochondrial tRNA(Phe). Also catalyzes pseudouridylation of mRNAs in nucleus: acts as a regulator of pre-mRNA splicing by mediating pseudouridylation of pre-mRNAs at locations associated with alternatively spliced regions. Pseudouridylation of pre-mRNAs near splice sites directly regulates mRNA splicing and mRNA 3'-end processing. This Xenopus tropicalis (Western clawed frog) protein is Pseudouridylate synthase RPUSD4, mitochondrial.